The chain runs to 88 residues: Large ribosomal subunit protein bL27 (88 aa).

The interval 1-23 (MAHKKGTGSTRNGRDSNAQRLGV) is disordered. The span at 7–19 (TGSTRNGRDSNAQ) shows a compositional bias: polar residues.

Belongs to the bacterial ribosomal protein bL27 family.

The protein is Large ribosomal subunit protein bL27 (rpmA) of Synechococcus elongatus (strain ATCC 33912 / PCC 7942 / FACHB-805) (Anacystis nidulans R2).